The chain runs to 119 residues: Large ribosomal subunit protein bL20 (119 aa).

This sequence belongs to the bacterial ribosomal protein bL20 family.

Functionally, binds directly to 23S ribosomal RNA and is necessary for the in vitro assembly process of the 50S ribosomal subunit. It is not involved in the protein synthesizing functions of that subunit. The polypeptide is Large ribosomal subunit protein bL20 (Vesicomyosocius okutanii subsp. Calyptogena okutanii (strain HA)).